A 1016-amino-acid chain; its full sequence is C2 domain-containing protein 5 (1016 aa).

The region spanning 1-109 (MPGKLKVKIV…EAATVISGWF (109 aa)) is the C2 domain. Ca(2+) contacts are provided by D19, D26, D76, D78, S81, and D84. Residue S197 is modified to Phosphoserine; by PKB/AKT2. Phosphoserine occurs at positions 200 and 260. Residues 265-330 (LKEIPFNEDP…SGSAGKEGGP (66 aa)) are disordered. A compositionally biased stretch (polar residues) spans 274 to 289 (PNPNTHSSGPSTPLKN). Over residues 290–318 (QTYSFSPSKSYSRQSSSSDTDLSLTPKTG) the composition is skewed to low complexity. S293, S295, S304, S305, and S306 each carry phosphoserine. T317 bears the Phosphothreonine mark. Gly residues predominate over residues 319–328 (MGSGSAGKEG). The residue at position 323 (S323) is a Phosphoserine. The residue at position 601 (T601) is a Phosphothreonine. Positions 636–668 (VSEEMIGSPIPEPRQRSRLLRSQSESSDEVTEL) are disordered. Residues S643, S657, S659, S661, and S662 each carry the phosphoserine modification. T666 is subject to Phosphothreonine. S671, S817, and S869 each carry phosphoserine.

It depends on Ca(2+) as a cofactor. In terms of processing, phosphorylated on Ser-197 by active myristoylated kinase AKT2; insulin-stimulated phosphorylation by AKT2 regulates SLC2A4/GLUT4 translocation into the plasma membrane. Expressed in liver, muscle and fat.

The protein resides in the cytoplasmic vesicle membrane. It localises to the cytoplasm. Its subcellular location is the cell cortex. It is found in the cell membrane. The protein localises to the cell projection. The protein resides in the ruffle. Required for insulin-stimulated glucose transport and glucose transporter SLC2A4/GLUT4 translocation from intracellular glucose storage vesicle (GSV) to the plasma membrane (PM) in adipocytes. Binds phospholipid membranes in a calcium-dependent manner and is necessary for the optimal membrane fusion between SLC2A4/GLUT4 GSV and the PM. The sequence is that of C2 domain-containing protein 5 (C2cd5) from Mus musculus (Mouse).